Consider the following 318-residue polypeptide: MNGDHMVLGSSVTDQKAIILVIILLLLCLVAIAGNGFITAALGVEWVLRGTLLPCDKLLVSLRASRFCLQWVVMGKTIYVLLYPTAFPYNPVLQFLAFQWDFLNAATLWFSSWLSVFYCVKIATFTHPVFLWLKHKLSEWVPWMFFSSVGLSSFTTILFFIGNHSIYQNYLRNHLQPWNVTGNSIWSYCEKFYLFPVKMITWTMPTAVFFICMILLITSLGRHMEKALLTTSGFREPSVQAHVKALLALLSLAMLFISYFLSLVLSAAGIFPPLDFKFWVGESVIYLCAGVHPIILLFSNRRLRAVLERCRSSRCRTP.

At 1–7 (MNGDHMV) the chain is on the extracellular side. Residues 8–28 (LGSSVTDQKAIILVIILLLLC) form a helical membrane-spanning segment. Over 29-40 (LVAIAGNGFITA) the chain is Cytoplasmic. A helical transmembrane segment spans residues 41–61 (ALGVEWVLRGTLLPCDKLLVS). Residues 62 to 88 (LRASRFCLQWVVMGKTIYVLLYPTAFP) are Extracellular-facing. A helical transmembrane segment spans residues 89–109 (YNPVLQFLAFQWDFLNAATLW). Over 110–128 (FSSWLSVFYCVKIATFTHP) the chain is Cytoplasmic. Residues 129 to 149 (VFLWLKHKLSEWVPWMFFSSV) form a helical membrane-spanning segment. Topologically, residues 150 to 183 (GLSSFTTILFFIGNHSIYQNYLRNHLQPWNVTGN) are extracellular. Residues N163 and N179 are each glycosylated (N-linked (GlcNAc...) asparagine). The chain crosses the membrane as a helical span at residues 184 to 204 (SIWSYCEKFYLFPVKMITWTM). Topologically, residues 205 to 234 (PTAVFFICMILLITSLGRHMEKALLTTSGF) are cytoplasmic. Residues 235 to 255 (REPSVQAHVKALLALLSLAML) traverse the membrane as a helical segment. At 256 to 264 (FISYFLSLV) the chain is on the extracellular side. Residues 265-285 (LSAAGIFPPLDFKFWVGESVI) traverse the membrane as a helical segment. Residues 286-318 (YLCAGVHPIILLFSNRRLRAVLERCRSSRCRTP) are Cytoplasmic-facing.

This sequence belongs to the G-protein coupled receptor T2R family.

The protein resides in the membrane. Receptor that may play a role in the perception of bitterness and is gustducin-linked. May play a role in sensing the chemical composition of the gastrointestinal content. The activity of this receptor may stimulate alpha gustducin, mediate PLC-beta-2 activation and lead to the gating of TRPM5. The sequence is that of Taste receptor type 2 member 60 (TAS2R60) from Macaca mulatta (Rhesus macaque).